The primary structure comprises 199 residues: Interleukin-11 (199 aa).

A signal peptide spans 1-21; it reads MNCVCRLVLVVLSLWPDRVVA. Positions 182–190 are important for interaction with IL11RA and for the stimulation of cell proliferation; sequence HLTLDWAVR.

Belongs to the IL-6 superfamily. Interacts with IL11RA to associate with IL6ST, giving rise to a multimeric signaling complex.

It is found in the secreted. In terms of biological role, cytokine that stimulates the proliferation of hematopoietic stem cells and megakaryocyte progenitor cells and induces megakaryocyte maturation resulting in increased platelet production. Also promotes the proliferation of hepatocytes in response to liver damage. Binding to its receptor formed by IL6ST and IL11RA activates a signaling cascade that promotes cell proliferation. Signaling leads to the activation of intracellular protein kinases and the phosphorylation of STAT3. The interaction with the membrane-bound IL11RA and IL6ST stimulates 'classic signaling', whereas the binding of IL11 and soluble IL11RA to IL6ST stimulates 'trans-signaling'. The chain is Interleukin-11 from Rattus norvegicus (Rat).